The primary structure comprises 443 residues: ATP-dependent protease ATPase subunit HslU (443 aa).

Residues isoleucine 18, 60 to 65 (GVGKTE), aspartate 256, glutamate 321, and arginine 393 contribute to the ATP site.

The protein belongs to the ClpX chaperone family. HslU subfamily. In terms of assembly, a double ring-shaped homohexamer of HslV is capped on each side by a ring-shaped HslU homohexamer. The assembly of the HslU/HslV complex is dependent on binding of ATP.

It is found in the cytoplasm. ATPase subunit of a proteasome-like degradation complex; this subunit has chaperone activity. The binding of ATP and its subsequent hydrolysis by HslU are essential for unfolding of protein substrates subsequently hydrolyzed by HslV. HslU recognizes the N-terminal part of its protein substrates and unfolds these before they are guided to HslV for hydrolysis. This chain is ATP-dependent protease ATPase subunit HslU, found in Buchnera aphidicola subsp. Schizaphis graminum (strain Sg).